The following is a 299-amino-acid chain: ATP phosphoribosyltransferase (299 aa).

The protein belongs to the ATP phosphoribosyltransferase family. Long subfamily. Equilibrium between an active dimeric form, an inactive hexameric form and higher aggregates. Interconversion between the various forms is largely reversible and is influenced by the natural substrates and inhibitors of the enzyme. The cofactor is Mg(2+).

It is found in the cytoplasm. The catalysed reaction is 1-(5-phospho-beta-D-ribosyl)-ATP + diphosphate = 5-phospho-alpha-D-ribose 1-diphosphate + ATP. Its pathway is amino-acid biosynthesis; L-histidine biosynthesis; L-histidine from 5-phospho-alpha-D-ribose 1-diphosphate: step 1/9. Its activity is regulated as follows. Feedback inhibited by histidine. Catalyzes the condensation of ATP and 5-phosphoribose 1-diphosphate to form N'-(5'-phosphoribosyl)-ATP (PR-ATP). Has a crucial role in the pathway because the rate of histidine biosynthesis seems to be controlled primarily by regulation of HisG enzymatic activity. The polypeptide is ATP phosphoribosyltransferase (Salmonella dublin (strain CT_02021853)).